Here is a 123-residue protein sequence, read N- to C-terminus: Steroid Delta-isomerase (123 aa).

The active-site Proton donor is tyrosine 12. The active-site Proton acceptor is the aspartate 36. Aspartate 96 provides a ligand contact to substrate.

As to quaternary structure, homodimer.

The enzyme catalyses a 3-oxo-Delta(5)-steroid = a 3-oxo-Delta(4)-steroid. This is Steroid Delta-isomerase (ksdI) from Nocardioides simplex (Arthrobacter simplex).